A 187-amino-acid chain; its full sequence is Decorin-binding protein B (187 aa).

Positions M1–A20 are cleaved as a signal peptide.

The protein belongs to the decorin-binding protein family.

Binds to decorin which may mediate the adherence of B.burgdorferi to collagen fibers in skin and other tissues. The chain is Decorin-binding protein B (dbpB) from Borreliella burgdorferi (strain N40) (Borrelia burgdorferi).